The following is a 166-amino-acid chain: C-signal (166 aa).

Post-translationally, the mature C-signal (p17) is derived from the precursor sequence (p25) by proteolytic cleavage. The subtilisin-like protease PopC is directly responsible for cleavage of p25 to p17. The cleavage site is probably located between amino acid residues 60 and 68 in p25.

It localises to the secreted. Its subcellular location is the cell outer membrane. Its activity is regulated as follows. Synthesized as a precursor protein (p25), which is cleaved after secretion to generate the mature active C-signal (p17). The p25 precursor purified from M.xanthus cells does not display C-signal activity. In terms of biological role, cell-cell signaling protein required for fruiting body formation, a multicellular developmental program that is induced in response to starvation. Necessary for rippling, cellular aggregation, spore differentiation and for gene expression that is initiated after 6 hours of starvation. In starving cells, the C-signal directly induces aggregation and sporulation, which are induced at distinct threshold levels of C-signaling. Contact with C-signaling induces cells to glide with high speed and low stop and reversal frequencies toward aggregation centers. The C-signal acts as a morphogen and induces distinct events at distinct threshold levels. A regulated increase in the level of C-signaling during development ensures the correct temporal order of aggregation and sporulation. This is C-signal from Myxococcus xanthus.